Here is a 448-residue protein sequence, read N- to C-terminus: Beta-glucosidase B (448 aa).

Glutamate 167 functions as the Proton donor in the catalytic mechanism. Glutamate 356 (nucleophile) is an active-site residue.

It belongs to the glycosyl hydrolase 1 family.

It catalyses the reaction Hydrolysis of terminal, non-reducing beta-D-glucosyl residues with release of beta-D-glucose.. The chain is Beta-glucosidase B (bglB) from Paenibacillus polymyxa (Bacillus polymyxa).